The chain runs to 1268 residues: Vigilin (1268 aa).

Position 2 is an N-acetylserine (serine 2). Threonine 8 carries the phosphothreonine modification. 3 positions are modified to phosphoserine: serine 11, serine 31, and serine 35. KH domains follow at residues 158-229 (PKEH…RLEV), 230-302 (EKAF…AVEV), 303-371 (KKSQ…SVAA), 372-442 (PSWL…EINI), 443-514 (DHKF…DLII), 515-588 (EQRF…SVPI), 589-660 (FKQF…EVSI), 661-734 (PAKL…DIRA), 735-807 (KPEY…SMLV), 808-880 (DPKH…ECAI), 881-979 (PQKF…EVEV), 980-1059 (PFDL…SVTV), 1060-1134 (DPKY…DVPL), and 1135-1209 (DHRV…ALQV). Phosphothreonine is present on residues threonine 295 and threonine 296. Serine 317 bears the Phosphoserine mark. Tyrosine 437 carries the post-translational modification Phosphotyrosine. Serine 645 carries the post-translational modification Phosphoserine. The segment at 914–944 (ENAVHSTEPVVQENGDEAGEGREAKDCDPGS) is disordered. Positions 932-944 (GEGREAKDCDPGS) are enriched in basic and acidic residues. Residue lysine 991 is modified to N6-acetyllysine. The disordered stretch occupies residues 1233–1268 (WTASSSEKAPDMSSSEEFPSFGAQVAPKTLPWGPKR). Positions 1234 to 1249 (TASSSEKAPDMSSSEE) are enriched in polar residues. Residues serine 1247 and serine 1252 each carry the phosphoserine modification.

The protein resides in the cytoplasm. The protein localises to the nucleus. Functionally, appears to play a role in cell sterol metabolism. It may function to protect cells from over-accumulation of cholesterol. This chain is Vigilin (HDLBP), found in Homo sapiens (Human).